The sequence spans 237 residues: 1-(5-phosphoribosyl)-5-[(5-phosphoribosylamino)methylideneamino] imidazole-4-carboxamide isomerase (237 aa).

The Proton acceptor role is filled by aspartate 8. Catalysis depends on aspartate 128, which acts as the Proton donor.

It belongs to the HisA/HisF family.

It is found in the cytoplasm. It catalyses the reaction 1-(5-phospho-beta-D-ribosyl)-5-[(5-phospho-beta-D-ribosylamino)methylideneamino]imidazole-4-carboxamide = 5-[(5-phospho-1-deoxy-D-ribulos-1-ylimino)methylamino]-1-(5-phospho-beta-D-ribosyl)imidazole-4-carboxamide. The protein operates within amino-acid biosynthesis; L-histidine biosynthesis; L-histidine from 5-phospho-alpha-D-ribose 1-diphosphate: step 4/9. This Gemmatimonas aurantiaca (strain DSM 14586 / JCM 11422 / NBRC 100505 / T-27) protein is 1-(5-phosphoribosyl)-5-[(5-phosphoribosylamino)methylideneamino] imidazole-4-carboxamide isomerase.